The sequence spans 376 residues: Heme chaperone HemW (376 aa).

In terms of domain architecture, Radical SAM core spans 1–236 (MFKLPPISLY…LKQSGYKKYE (236 aa)). Y10 contacts S-adenosyl-L-methionine. Residues C16, C20, and C23 each contribute to the [4Fe-4S] cluster site. S-adenosyl-L-methionine-binding positions include G66, 67–68 (GT), E99, Q126, R138, and D162.

The protein belongs to the anaerobic coproporphyrinogen-III oxidase family. HemW subfamily. Requires [4Fe-4S] cluster as cofactor.

It localises to the cytoplasm. In terms of biological role, probably acts as a heme chaperone, transferring heme to an unknown acceptor. Binds one molecule of heme per monomer, possibly covalently. Binds 1 [4Fe-4S] cluster. The cluster is coordinated with 3 cysteines and an exchangeable S-adenosyl-L-methionine. The chain is Heme chaperone HemW from Buchnera aphidicola subsp. Schizaphis graminum (strain Sg).